Here is a 280-residue protein sequence, read N- to C-terminus: Nucleotide-binding protein Swoo_4243 (280 aa).

8 to 15 serves as a coordination point for ATP; the sequence is GRSGSGKS. Residue 56–59 coordinates GTP; sequence DVRN.

Belongs to the RapZ-like family.

Its function is as follows. Displays ATPase and GTPase activities. The polypeptide is Nucleotide-binding protein Swoo_4243 (Shewanella woodyi (strain ATCC 51908 / MS32)).